The primary structure comprises 205 residues: Variable small protein 11 (205 aa).

An N-terminal signal peptide occupies residues 1–18 (MRKRISAIIMTLFMVFMS). Cys19 carries N-palmitoyl cysteine lipidation. Cys19 carries the S-diacylglycerol cysteine lipid modification.

The protein belongs to the variable small protein (Vsp) family.

The protein localises to the cell outer membrane. The Vlp and Vsp proteins are antigenically distinct proteins, only one vlp or vsp gene is transcriptionally active at any one time. Switching between these genes is a mechanism of host immune response evasion. The chain is Variable small protein 11 from Borrelia hermsii.